Reading from the N-terminus, the 85-residue chain is RNA-binding protein Hfq (85 aa).

Residues 10–69 form the Sm domain; that stretch reads DPFLNILRKEHVPVSIYLVNGIKLQGQIESFDQYVVLLKNTVTQMVYKHAISTVVPARPV.

This sequence belongs to the Hfq family. Homohexamer.

RNA chaperone that binds small regulatory RNA (sRNAs) and mRNAs to facilitate mRNA translational regulation in response to envelope stress, environmental stress and changes in metabolite concentrations. Also binds with high specificity to tRNAs. This chain is RNA-binding protein Hfq, found in Laribacter hongkongensis (strain HLHK9).